Consider the following 156-residue polypeptide: Crossover junction endodeoxyribonuclease RuvC (156 aa).

Residues D7, E66, and D138 contribute to the active site. 3 residues coordinate Mg(2+): D7, E66, and D138.

The protein belongs to the RuvC family. Homodimer which binds Holliday junction (HJ) DNA. The HJ becomes 2-fold symmetrical on binding to RuvC with unstacked arms; it has a different conformation from HJ DNA in complex with RuvA. In the full resolvosome a probable DNA-RuvA(4)-RuvB(12)-RuvC(2) complex forms which resolves the HJ. The cofactor is Mg(2+).

It localises to the cytoplasm. The enzyme catalyses Endonucleolytic cleavage at a junction such as a reciprocal single-stranded crossover between two homologous DNA duplexes (Holliday junction).. The RuvA-RuvB-RuvC complex processes Holliday junction (HJ) DNA during genetic recombination and DNA repair. Endonuclease that resolves HJ intermediates. Cleaves cruciform DNA by making single-stranded nicks across the HJ at symmetrical positions within the homologous arms, yielding a 5'-phosphate and a 3'-hydroxyl group; requires a central core of homology in the junction. The consensus cleavage sequence is 5'-(A/T)TT(C/G)-3'. Cleavage occurs on the 3'-side of the TT dinucleotide at the point of strand exchange. HJ branch migration catalyzed by RuvA-RuvB allows RuvC to scan DNA until it finds its consensus sequence, where it cleaves and resolves the cruciform DNA. This Ehrlichia chaffeensis (strain ATCC CRL-10679 / Arkansas) protein is Crossover junction endodeoxyribonuclease RuvC.